We begin with the raw amino-acid sequence, 559 residues long: Pentatricopeptide repeat-containing protein At1g08610 (559 aa).

13 PPR repeats span residues 103 to 137 (DEET…NQVP), 138 to 172 (HFPS…GGVP), 173 to 207 (DTIT…GSPP), 208 to 242 (DVIT…GCPP), 243 to 277 (FMIT…GCYP), 278 to 312 (DIVT…GLEL), 313 to 347 (NTVT…SYCP), 348 to 382 (TVIT…KCLP), 383 to 417 (DIVT…CCPP), 418 to 452 (GLIT…GIFP), 453 to 487 (DDIT…GNGI), 488 to 522 (RGST…GCKP), and 523 to 557 (DETI…KLLK).

This sequence belongs to the PPR family. P subfamily.

The protein is Pentatricopeptide repeat-containing protein At1g08610 of Arabidopsis thaliana (Mouse-ear cress).